The following is a 295-amino-acid chain: Light-independent protochlorophyllide reductase iron-sulfur ATP-binding protein (295 aa).

Residues 39-44 (GIGKST) and Lys68 contribute to the ATP site. Ser43 serves as a coordination point for Mg(2+). The [4Fe-4S] cluster site is built by Cys124 and Cys158. 209–210 (NR) is an ATP binding site.

This sequence belongs to the NifH/BchL/ChlL family. Homodimer. Protochlorophyllide reductase is composed of three subunits; ChlL, ChlN and ChlB. It depends on [4Fe-4S] cluster as a cofactor.

The enzyme catalyses chlorophyllide a + oxidized 2[4Fe-4S]-[ferredoxin] + 2 ADP + 2 phosphate = protochlorophyllide a + reduced 2[4Fe-4S]-[ferredoxin] + 2 ATP + 2 H2O. It participates in porphyrin-containing compound metabolism; chlorophyll biosynthesis (light-independent). In terms of biological role, component of the dark-operative protochlorophyllide reductase (DPOR) that uses Mg-ATP and reduced ferredoxin to reduce ring D of protochlorophyllide (Pchlide) to form chlorophyllide a (Chlide). This reaction is light-independent. The L component serves as a unique electron donor to the NB-component of the complex, and binds Mg-ATP. The polypeptide is Light-independent protochlorophyllide reductase iron-sulfur ATP-binding protein (Prochlorococcus marinus (strain AS9601)).